A 115-amino-acid chain; its full sequence is NADH-ubiquinone oxidoreductase chain 3 (115 aa).

Transmembrane regions (helical) follow at residues F3 to W23, F55 to L75, and L84 to Y104.

The protein belongs to the complex I subunit 3 family. As to quaternary structure, core subunit of respiratory chain NADH dehydrogenase (Complex I) which is composed of 45 different subunits. Interacts with TMEM186. Interacts with TMEM242.

The protein localises to the mitochondrion inner membrane. The catalysed reaction is a ubiquinone + NADH + 5 H(+)(in) = a ubiquinol + NAD(+) + 4 H(+)(out). Its function is as follows. Core subunit of the mitochondrial membrane respiratory chain NADH dehydrogenase (Complex I) which catalyzes electron transfer from NADH through the respiratory chain, using ubiquinone as an electron acceptor. Essential for the catalytic activity of complex I. The polypeptide is NADH-ubiquinone oxidoreductase chain 3 (Pan paniscus (Pygmy chimpanzee)).